Here is a 489-residue protein sequence, read N- to C-terminus: CBL-interacting serine/threonine-protein kinase 12 (489 aa).

A Protein kinase domain is found at 26–280 (YEMGKLLGHG…FPEIMENSWF (255 aa)). ATP is bound by residues 32–40 (LGHGTFAKV) and Lys-55. The active-site Proton acceptor is Asp-148. The activation loop stretch occupies residues 166 to 195 (DFGLSAVSDQIRQDGLFHTFCGTPAYVAPE). Ser-170 is modified (phosphoserine). Thr-184 is subject to Phosphothreonine. The region spanning 336–360 (PRPASLNAFDIISFSQGFDLSGLFD) is the NAF domain. A PPI region spans residues 363-392 (GEGSRFVSGAPVSKIISKLEEIAKVVSFTV).

This sequence belongs to the protein kinase superfamily. CAMK Ser/Thr protein kinase family. SNF1 subfamily. Interacts with CBL2 and CBL3. Mn(2+) serves as cofactor. Expressed in roots and shoots.

The enzyme catalyses L-seryl-[protein] + ATP = O-phospho-L-seryl-[protein] + ADP + H(+). It catalyses the reaction L-threonyl-[protein] + ATP = O-phospho-L-threonyl-[protein] + ADP + H(+). CIPK serine-threonine protein kinases interact with CBL proteins. Binding of a CBL protein to the regulatory NAF domain of CIPK protein lead to the activation of the kinase in a calcium-dependent manner. The chain is CBL-interacting serine/threonine-protein kinase 12 (CIPK12) from Arabidopsis thaliana (Mouse-ear cress).